The primary structure comprises 201 residues: Holliday junction branch migration complex subunit RuvA (201 aa).

The domain I stretch occupies residues 1–64; that stretch reads MYEYIRGQFQ…EDFIGLYGFT (64 aa). The tract at residues 65–143 is domain II; it reads TREELEMFKL…PDELTSEEGE (79 aa). Positions 144 to 152 are flexible linker; sequence LIEGINDNS. Positions 153 to 201 are domain III; sequence DYSFNINETLSALMALGYTEKEAQKALEKVDKTLSIENMIKESLKLLMR.

This sequence belongs to the RuvA family. Homotetramer. Forms an RuvA(8)-RuvB(12)-Holliday junction (HJ) complex. HJ DNA is sandwiched between 2 RuvA tetramers; dsDNA enters through RuvA and exits via RuvB. An RuvB hexamer assembles on each DNA strand where it exits the tetramer. Each RuvB hexamer is contacted by two RuvA subunits (via domain III) on 2 adjacent RuvB subunits; this complex drives branch migration. In the full resolvosome a probable DNA-RuvA(4)-RuvB(12)-RuvC(2) complex forms which resolves the HJ.

It is found in the cytoplasm. Its function is as follows. The RuvA-RuvB-RuvC complex processes Holliday junction (HJ) DNA during genetic recombination and DNA repair, while the RuvA-RuvB complex plays an important role in the rescue of blocked DNA replication forks via replication fork reversal (RFR). RuvA specifically binds to HJ cruciform DNA, conferring on it an open structure. The RuvB hexamer acts as an ATP-dependent pump, pulling dsDNA into and through the RuvAB complex. HJ branch migration allows RuvC to scan DNA until it finds its consensus sequence, where it cleaves and resolves the cruciform DNA. In Clostridium perfringens (strain ATCC 13124 / DSM 756 / JCM 1290 / NCIMB 6125 / NCTC 8237 / Type A), this protein is Holliday junction branch migration complex subunit RuvA.